The following is a 356-amino-acid chain: tRNA N6-adenosine threonylcarbamoyltransferase (356 aa).

Fe cation-binding residues include histidine 115 and histidine 119. Substrate-binding positions include leucine 138–glycine 142, aspartate 171, glycine 184, and asparagine 283. Position 311 (aspartate 311) interacts with Fe cation.

The protein belongs to the KAE1 / TsaD family. The cofactor is Fe(2+).

The protein resides in the cytoplasm. The enzyme catalyses L-threonylcarbamoyladenylate + adenosine(37) in tRNA = N(6)-L-threonylcarbamoyladenosine(37) in tRNA + AMP + H(+). Required for the formation of a threonylcarbamoyl group on adenosine at position 37 (t(6)A37) in tRNAs that read codons beginning with adenine. Is involved in the transfer of the threonylcarbamoyl moiety of threonylcarbamoyl-AMP (TC-AMP) to the N6 group of A37, together with TsaE and TsaB. TsaD likely plays a direct catalytic role in this reaction. In Prochlorococcus marinus (strain SARG / CCMP1375 / SS120), this protein is tRNA N6-adenosine threonylcarbamoyltransferase.